The primary structure comprises 149 residues: Cyanate hydratase (149 aa).

Catalysis depends on residues Arg-90, Glu-93, and Ser-116.

It belongs to the cyanase family.

It carries out the reaction cyanate + hydrogencarbonate + 3 H(+) = NH4(+) + 2 CO2. Its function is as follows. Catalyzes the reaction of cyanate with bicarbonate to produce ammonia and carbon dioxide. In Aquifex aeolicus (strain VF5), this protein is Cyanate hydratase.